Reading from the N-terminus, the 536-residue chain is Copine-1 (536 aa).

2 consecutive C2 domains span residues Met1–Leu113 and Gly122–His244. 7 residues coordinate Ca(2+): Asp21, Asp27, Asp79, Asp81, Asp91, Asp152, and Asp158. Lys170 is modified (N6-acetyllysine). Ca(2+) is bound by residues Asp213, Asp215, and Asp221. The VWFA domain occupies Gln282–Pro484.

This sequence belongs to the copine family. In terms of assembly, homodimer; homodimerizes via its C2 domains. Interacts with p65/RELA (via N-terminus); this interaction induces proteolytic cleavage of p65/RELA subunit and inhibition of NF-kappa-B transcriptional activity. Interacts (via VWFA domain) with ACTB, CCDC22, MYCBP2, PPP5C, RDX and UBE2O. It depends on Ca(2+) as a cofactor. Expressed in liver, brain, heart, intestine, kidney and lung (at protein level).

The protein localises to the nucleus. It localises to the cytoplasm. Its subcellular location is the cell membrane. Calcium-dependent phospholipid-binding protein that plays a role in calcium-mediated intracellular processes. Involved in the TNF-alpha receptor signaling pathway in a calcium-dependent manner. Exhibits calcium-dependent phospholipid binding properties. Plays a role in neuronal progenitor cell differentiation; induces neurite outgrowth via a AKT-dependent signaling cascade and calcium-independent manner. May recruit target proteins to the cell membrane in a calcium-dependent manner. May function in membrane trafficking. Involved in TNF-alpha-induced NF-kappa-B transcriptional repression by inducing endoprotease processing of the transcription factor NF-kappa-B p65/RELA subunit. Also induces endoprotease processing of NF-kappa-B p50/NFKB1, p52/NFKB2, RELB and REL. This is Copine-1 from Rattus norvegicus (Rat).